A 910-amino-acid polypeptide reads, in one-letter code: Schlafen family member 8 (910 aa).

Residues 1–354 (METHPSLAVK…WVRMMVDFGP (354 aa)) are n'-domain region. Active-site residues include Glu205 and Glu210. 3 residues coordinate Zn(2+): His280, Cys282, and Cys319. 599–606 (GLPGSGKT) provides a ligand contact to ATP.

It belongs to the Schlafen family. Subgroup III subfamily. Requires Mg(2+) as cofactor. In T-cells, expressed at relatively constant levels during development: expressed in immature CD3(-)CD4(-)CD8(-) T-cells (DN stage), in CD4(+)CD8(+) double-positive stage (DP) and mature CD4(+) or CD8(+) thymocytes. Expression is slightly reduced at the DP stage.

It is found in the cytoplasm. Endoribonuclease that cleaves tRNAs and rRNAs. Cleaves tRNAs 11 nucleotides from the 3'-terminus at the acceptor stem. May be involved in immune system via regulation of inflammation. This is Schlafen family member 8 from Mus musculus (Mouse).